We begin with the raw amino-acid sequence, 77 residues long: Translation initiation factor IF-1, chloroplastic (77 aa).

Residues M1–R72 form the S1-like domain.

This sequence belongs to the IF-1 family. Component of the 30S ribosomal translation pre-initiation complex which assembles on the 30S ribosome in the order IF-2 and IF-3, IF-1 and N-formylmethionyl-tRNA(fMet); mRNA recruitment can occur at any time during PIC assembly.

Its subcellular location is the plastid. It is found in the chloroplast. Its function is as follows. One of the essential components for the initiation of protein synthesis. Stabilizes the binding of IF-2 and IF-3 on the 30S subunit to which N-formylmethionyl-tRNA(fMet) subsequently binds. Helps modulate mRNA selection, yielding the 30S pre-initiation complex (PIC). Upon addition of the 50S ribosomal subunit IF-1, IF-2 and IF-3 are released leaving the mature 70S translation initiation complex. This chain is Translation initiation factor IF-1, chloroplastic, found in Zygnema circumcarinatum (Green alga).